A 28-amino-acid chain; its full sequence is M-ectatotoxin-Eb2c (28 aa).

In terms of tissue distribution, expressed by the venom gland.

The protein localises to the secreted. In terms of biological role, antimicrobial peptide active against Gram-negative bacterium E.coli MH1 (MIC=3.5 uM) and P.aeruginosa PAO1 (MIC=10 uM) and against Gram-positive bacterium A.globiformis VKM Ac-1112 (MIC=1.25 uM). This chain is M-ectatotoxin-Eb2c, found in Ectatomma brunneum (Ant).